We begin with the raw amino-acid sequence, 260 residues long: Homeobox protein CDX-1 (260 aa).

Residues 149–208 (KDKYRVVYTDHQRLELEKEFHYSRYITIRRKAELAAALGLTERQVKIWFQNRRAKERKVN) constitute a DNA-binding region (homeobox). The interaction with DNA stretch occupies residues 152–173 (YRVVYTDHQRLELEKEFHYSRY). The interaction with 5-mCpG DNA stretch occupies residues 191–202 (RQVKIWFQNRRA). Positions 204-260 (ERKVNKKKLQQQSQPTSTTTPTPPAVGTPGPMGTLCSGSAPSLVSSSPLTIKEEFMP) are disordered. 2 stretches are compositionally biased toward low complexity: residues 213-223 (QQQSQPTSTTT) and 240-252 (SGSAPSLVSSSPL).

This sequence belongs to the Caudal homeobox family.

The protein resides in the nucleus. Plays a role in transcriptional regulation. Involved in activated KRAS-mediated transcriptional activation of PRKD1. Binds to the PRKD1 promoter. Could play a role in the terminal differentiation of the intestine. Binds preferentially to methylated DNA. The protein is Homeobox protein CDX-1 (CDX1) of Gallus gallus (Chicken).